Consider the following 135-residue polypeptide: Large ribosomal subunit protein uL16 (135 aa).

This sequence belongs to the universal ribosomal protein uL16 family. Part of the 50S ribosomal subunit.

In terms of biological role, binds 23S rRNA and is also seen to make contacts with the A and possibly P site tRNAs. The sequence is that of Large ribosomal subunit protein uL16 (rplP) from Carsonella ruddii (strain PV).